We begin with the raw amino-acid sequence, 235 residues long: Ubiquinone/menaquinone biosynthesis C-methyltransferase UbiE (235 aa).

Residues threonine 60, aspartate 81, and serine 126 each contribute to the S-adenosyl-L-methionine site.

It belongs to the class I-like SAM-binding methyltransferase superfamily. MenG/UbiE family.

It carries out the reaction a 2-demethylmenaquinol + S-adenosyl-L-methionine = a menaquinol + S-adenosyl-L-homocysteine + H(+). The catalysed reaction is a 2-methoxy-6-(all-trans-polyprenyl)benzene-1,4-diol + S-adenosyl-L-methionine = a 5-methoxy-2-methyl-3-(all-trans-polyprenyl)benzene-1,4-diol + S-adenosyl-L-homocysteine + H(+). It functions in the pathway quinol/quinone metabolism; menaquinone biosynthesis; menaquinol from 1,4-dihydroxy-2-naphthoate: step 2/2. It participates in cofactor biosynthesis; ubiquinone biosynthesis. Functionally, methyltransferase required for the conversion of demethylmenaquinol (DMKH2) to menaquinol (MKH2) and the conversion of 2-polyprenyl-6-methoxy-1,4-benzoquinol (DDMQH2) to 2-polyprenyl-3-methyl-6-methoxy-1,4-benzoquinol (DMQH2). The protein is Ubiquinone/menaquinone biosynthesis C-methyltransferase UbiE of Citrifermentans bemidjiense (strain ATCC BAA-1014 / DSM 16622 / JCM 12645 / Bem) (Geobacter bemidjiensis).